We begin with the raw amino-acid sequence, 476 residues long: Ubiquitin-conjugating enzyme E2 variant 3 (476 aa).

The UEV domain maps to 2–145; it reads EFSAETLRQQ…EEELPLYSLS (144 aa). 185-213 contacts NAD(+); the sequence is GDMALACLLAVSAKGTAGKLLLLDPTDGE.

This sequence in the N-terminal section; belongs to the ubiquitin-conjugating enzyme family. UEV subfamily. The protein in the C-terminal section; belongs to the LDH/MDH superfamily. As to quaternary structure, homodimer.

In terms of biological role, possible negative regulator of polyubiquitination. In Xenopus tropicalis (Western clawed frog), this protein is Ubiquitin-conjugating enzyme E2 variant 3 (uevld).